Consider the following 396-residue polypeptide: Tryptophan synthase beta chain (396 aa).

Lys-86 carries the post-translational modification N6-(pyridoxal phosphate)lysine.

This sequence belongs to the TrpB family. As to quaternary structure, tetramer of two alpha and two beta chains. Requires pyridoxal 5'-phosphate as cofactor.

The catalysed reaction is (1S,2R)-1-C-(indol-3-yl)glycerol 3-phosphate + L-serine = D-glyceraldehyde 3-phosphate + L-tryptophan + H2O. It participates in amino-acid biosynthesis; L-tryptophan biosynthesis; L-tryptophan from chorismate: step 5/5. The beta subunit is responsible for the synthesis of L-tryptophan from indole and L-serine. The sequence is that of Tryptophan synthase beta chain from Francisella philomiragia subsp. philomiragia (strain ATCC 25017 / CCUG 19701 / FSC 153 / O#319-036).